The following is a 574-amino-acid chain: Lysyl oxidase homolog 1 (574 aa).

A signal peptide spans 1–25 (MALARGSRQLGALVWGACLCVLVHG). Positions 26–95 (QQAQPGQGSD…RRSHGSPRRR (70 aa)) are excised as a propeptide. Disordered stretches follow at residues 62–123 (VPAG…GFGQ) and 239–374 (GGEE…DLVP). Basic residues predominate over residues 86–96 (RRSHGSPRRRQ). 2 stretches are compositionally biased toward pro residues: residues 255 to 268 (PERP…PPPD) and 313 to 332 (YANP…PPYL). The interval 311-369 (PPYANPPPEAYGPPRALEPPYLPVRSSDTPPPGGERNGAQQGRLSVGSVYRPNQNGRGL) is interaction with FBLN5. The tract at residues 370–574 (PDLVPDPNYV…SATNCKIVQS (205 aa)) is lysyl-oxidase like. 5 cysteine pairs are disulfide-bonded: C395/C401, C448/C497, C481/C487, C508/C518, and C555/C569. H449, H451, and H453 together coordinate Cu cation. A cross-link (lysine tyrosylquinone (Lys-Tyr); alternate) is located at residues 477 to 512 (KASFCLEDSTCDFGNLKRYACTSHTQGLSPGCYDTY). 2',4',5'-topaquinone; alternate is present on Y512.

Belongs to the lysyl oxidase family. Interacts (via propeptide) with EFEMP2. Interacts with FBLN5. Requires Cu cation as cofactor. Lysine tyrosylquinone residue serves as cofactor. In terms of processing, the lysine tyrosylquinone cross-link (LTQ) is generated by condensation of the epsilon-amino group of a lysine with a topaquinone produced by oxidation of tyrosine. Post-translationally, proteolytic processing by a furin-like protease causes removal of N-terminal propeptide resulting in an enzyme largely inactive, but further proteolytic processing by BMP1 results in enzyme activation. In terms of tissue distribution, expressed in ocular tissues including the iris, ciliary body, lens and optic nerve. Not detected in the retina.

It is found in the secreted. The protein localises to the extracellular space. The protein resides in the extracellular matrix. The enzyme catalyses L-lysyl-[protein] + O2 + H2O = (S)-2-amino-6-oxohexanoyl-[protein] + H2O2 + NH4(+). In terms of biological role, catalyzes the oxidative deamination of lysine and hydroxylysine residues in collagen and elastin, resulting in the formation of covalent cross-linkages, and the stabilization of collagen and elastin fibers. Essential for the elastic fiber homeostasis and for their maintenance at adult age. The polypeptide is Lysyl oxidase homolog 1 (LOXL1) (Homo sapiens (Human)).